Here is a 238-residue protein sequence, read N- to C-terminus: N-(5'-phosphoribosyl)anthranilate isomerase (238 aa).

It belongs to the TrpF family.

It carries out the reaction N-(5-phospho-beta-D-ribosyl)anthranilate = 1-(2-carboxyphenylamino)-1-deoxy-D-ribulose 5-phosphate. It participates in amino-acid biosynthesis; L-tryptophan biosynthesis; L-tryptophan from chorismate: step 3/5. The protein is N-(5'-phosphoribosyl)anthranilate isomerase of Methanosarcina acetivorans (strain ATCC 35395 / DSM 2834 / JCM 12185 / C2A).